The chain runs to 104 residues: Large ribosomal subunit protein bL21 (104 aa).

It belongs to the bacterial ribosomal protein bL21 family. As to quaternary structure, part of the 50S ribosomal subunit. Contacts protein L20.

Its function is as follows. This protein binds to 23S rRNA in the presence of protein L20. In Desulfosudis oleivorans (strain DSM 6200 / JCM 39069 / Hxd3) (Desulfococcus oleovorans), this protein is Large ribosomal subunit protein bL21.